The primary structure comprises 325 residues: ADP-ribose glycohydrolase MACROD1 (325 aa).

An N6-succinyllysine mark is found at K96, K103, and K129. K138 is covalently cross-linked (Glycyl lysine isopeptide (Lys-Gly) (interchain with G-Cter in SUMO2)). The 182-residue stretch at 141 to 322 (EPRYKKDKQL…IYRSRLPHYF (182 aa)) folds into the Macro domain. 159-161 (SDI) contributes to the substrate binding site. K163 is modified (N6-acetyllysine). Substrate contacts are provided by residues 172 to 174 (AAN), 179 to 184 (GGGGVD), 267 to 273 (ISTGVFG), and F306.

This sequence belongs to the MacroD-type family. MacroD1/2-like subfamily. As to quaternary structure, interacts with ESR1; Interacts in a manner that is estrogen independent but is enhanced by estrogen. Interacts (via macro domain) with AR.

It is found in the nucleus. It carries out the reaction 3''-O-acetyl-ADP-D-ribose + H2O = ADP-D-ribose + acetate + H(+). It catalyses the reaction 2''-O-acetyl-ADP-D-ribose + H2O = ADP-D-ribose + acetate + H(+). The catalysed reaction is 4-O-(ADP-D-ribosyl)-L-aspartyl-[protein] + H2O = L-aspartyl-[protein] + ADP-D-ribose + H(+). The enzyme catalyses 5-O-(ADP-D-ribosyl)-L-glutamyl-[protein] + H2O = L-glutamyl-[protein] + ADP-D-ribose + H(+). It carries out the reaction alpha-NAD(+) + H2O = ADP-D-ribose + nicotinamide + H(+). With respect to regulation, subject to competitive inhibition by the product ADP-ribose. In terms of biological role, removes ADP-ribose from aspartate and glutamate residues in proteins bearing a single ADP-ribose moiety. Inactive towards proteins bearing poly-ADP-ribose. Deacetylates O-acetyl-ADP ribose, a signaling molecule generated by the deacetylation of acetylated lysine residues in histones and other proteins. Plays a role in estrogen signaling. Binds to androgen receptor (AR) and amplifies the transactivation function of AR in response to androgen. May play an important role in carcinogenesis and/or progression of hormone-dependent cancers by feed-forward mechanism that activates ESR1 transactivation. Could be an ESR1 coactivator, providing a positive feedback regulatory loop for ESR1 signal transduction. Could be involved in invasive growth by down-regulating CDH1 in endometrial cancer cells. Enhances ESR1-mediated transcription activity. The polypeptide is ADP-ribose glycohydrolase MACROD1 (Homo sapiens (Human)).